A 247-amino-acid polypeptide reads, in one-letter code: tRNA pseudouridine synthase A (247 aa).

The Nucleophile role is filled by aspartate 52. Tyrosine 111 provides a ligand contact to substrate.

Belongs to the tRNA pseudouridine synthase TruA family. Homodimer.

It carries out the reaction uridine(38/39/40) in tRNA = pseudouridine(38/39/40) in tRNA. Formation of pseudouridine at positions 38, 39 and 40 in the anticodon stem and loop of transfer RNAs. This Erythrobacter litoralis (strain HTCC2594) protein is tRNA pseudouridine synthase A.